The following is a 329-amino-acid chain: ATPase ASNA1 homolog 1 (329 aa).

26-33 (KGGVGKTT) lines the ATP pocket. Asp55 is an active-site residue. Residues Glu235 and Asn262 each contribute to the ATP site. Zn(2+)-binding residues include Cys271 and Cys274.

The protein belongs to the arsA ATPase family. In terms of assembly, homodimer.

The protein resides in the cytoplasm. It localises to the endoplasmic reticulum. Its function is as follows. ATPase required for the post-translational delivery of tail-anchored (TA) proteins to the endoplasmic reticulum. Recognizes and selectively binds the transmembrane domain of TA proteins in the cytosol. This complex then targets to the endoplasmic reticulum by membrane-bound receptors, where the tail-anchored protein is released for insertion. This process is regulated by ATP binding and hydrolysis. ATP binding drives the homodimer towards the closed dimer state, facilitating recognition of newly synthesized TA membrane proteins. ATP hydrolysis is required for insertion. Subsequently, the homodimer reverts towards the open dimer state, lowering its affinity for the membrane-bound receptor, and returning it to the cytosol to initiate a new round of targeting. The sequence is that of ATPase ASNA1 homolog 1 from Paramecium tetraurelia.